Consider the following 530-residue polypeptide: Autoinducer-2 kinase (530 aa).

Belongs to the FGGY kinase family.

It is found in the cytoplasm. The enzyme catalyses (S)-4,5-dihydroxypentane-2,3-dione + ATP = (2S)-2-hydroxy-3,4-dioxopentyl phosphate + ADP + H(+). Catalyzes the phosphorylation of autoinducer-2 (AI-2) to phospho-AI-2, which subsequently inactivates the transcriptional regulator LsrR and leads to the transcription of the lsr operon. Phosphorylates the ring-open form of (S)-4,5-dihydroxypentane-2,3-dione (DPD), which is the precursor to all AI-2 signaling molecules, at the C5 position. The sequence is that of Autoinducer-2 kinase from Yersinia pseudotuberculosis serotype O:3 (strain YPIII).